A 394-amino-acid polypeptide reads, in one-letter code: Protein TsgA homolog (394 aa).

12 consecutive transmembrane segments (helical) span residues 11–31 (WISF…GMVL), 51–71 (FLNA…EIVP), 76–96 (LIFG…SHSL), 101–121 (LCMF…TFLI), 135–155 (LFTD…AAAI), 163–183 (YWVY…ALCF), 205–225 (LGVA…LGFI), 245–265 (SVVG…SAIL), 273–293 (IVTA…NTTD), 299–319 (WIIM…ITLG), 333–353 (FILT…GPIV), and 362–382 (LATT…LGFV).

It belongs to the major facilitator superfamily. TsgA family.

The protein resides in the cell inner membrane. The chain is Protein TsgA homolog from Erwinia tasmaniensis (strain DSM 17950 / CFBP 7177 / CIP 109463 / NCPPB 4357 / Et1/99).